A 29-amino-acid polypeptide reads, in one-letter code: Glucagon (29 aa).

Belongs to the glucagon family.

The protein localises to the secreted. Functionally, glucagon plays a key role in glucose metabolism and homeostasis. Regulates blood glucose by increasing gluconeogenesis and decreasing glycolysis. The polypeptide is Glucagon (GCG) (Meleagris gallopavo (Wild turkey)).